A 282-amino-acid chain; its full sequence is MNLIDGKQIAAKVKGEVATEVRALAARGVQTGLTVVRVGDDPASAIYVRGKRKDCEEVGITSVEHHLPVTTTQAELLALIARLNADPAVHGILVQLPLPKHVDERAVLDAISPAKDADGFHPFNVGALSIGIAGVPRPCTPAGVMRMLDEARVDPKGKRALVVGRSNIVGKPMAMMLLERHATVTIAHSRTADLAGEVGRADILVAAIGKAELVKGAWVKEGAVVIDVGMNRLADGKLVGDVEFAAAAARASAITPVPGGVGPMTRAMLLVNTVELAKRVAR.

NADP(+)-binding positions include 164–166 (GRS) and S189.

This sequence belongs to the tetrahydrofolate dehydrogenase/cyclohydrolase family. In terms of assembly, homodimer.

The catalysed reaction is (6R)-5,10-methylene-5,6,7,8-tetrahydrofolate + NADP(+) = (6R)-5,10-methenyltetrahydrofolate + NADPH. The enzyme catalyses (6R)-5,10-methenyltetrahydrofolate + H2O = (6R)-10-formyltetrahydrofolate + H(+). It functions in the pathway one-carbon metabolism; tetrahydrofolate interconversion. In terms of biological role, catalyzes the oxidation of 5,10-methylenetetrahydrofolate to 5,10-methenyltetrahydrofolate and then the hydrolysis of 5,10-methenyltetrahydrofolate to 10-formyltetrahydrofolate. The chain is Bifunctional protein FolD from Anaeromyxobacter dehalogenans (strain 2CP-C).